The chain runs to 440 residues: Chromosome partition protein MukF (440 aa).

Residues 208-236 (LSETSGTLRELQDTLEAAGDKLQANLLRI) form a leucine-zipper region.

It belongs to the MukF family. Interacts, and probably forms a ternary complex, with MukE and MukB via its C-terminal region. The complex formation is stimulated by calcium or magnesium. It is required for an interaction between MukE and MukB.

The protein resides in the cytoplasm. The protein localises to the nucleoid. Its function is as follows. Involved in chromosome condensation, segregation and cell cycle progression. May participate in facilitating chromosome segregation by condensation DNA from both sides of a centrally located replisome during cell division. Not required for mini-F plasmid partitioning. Probably acts via its interaction with MukB and MukE. Overexpression results in anucleate cells. It has a calcium binding activity. The protein is Chromosome partition protein MukF of Escherichia coli (strain UTI89 / UPEC).